Consider the following 456-residue polypeptide: Adenylosuccinate synthetase (456 aa).

GTP contacts are provided by residues 11 to 17 (GDEGKGG) and 39 to 41 (GHT). Aspartate 12 acts as the Proton acceptor in catalysis. Aspartate 12 and glycine 39 together coordinate Mg(2+). Residues 12 to 15 (DEGK), 37 to 40 (NAGH), threonine 127, arginine 141, glutamine 232, threonine 247, and arginine 328 contribute to the IMP site. Residue histidine 40 is the Proton donor of the active site. Residue 324–330 (TVTGRPR) participates in substrate binding. GTP contacts are provided by residues arginine 330, 356–358 (HLD), and 441–443 (GVG).

It belongs to the adenylosuccinate synthetase family. In terms of assembly, homodimer. The cofactor is Mg(2+).

The protein localises to the cytoplasm. It catalyses the reaction IMP + L-aspartate + GTP = N(6)-(1,2-dicarboxyethyl)-AMP + GDP + phosphate + 2 H(+). It functions in the pathway purine metabolism; AMP biosynthesis via de novo pathway; AMP from IMP: step 1/2. Functionally, plays an important role in the de novo pathway of purine nucleotide biosynthesis. Catalyzes the first committed step in the biosynthesis of AMP from IMP. The chain is Adenylosuccinate synthetase from Natronomonas pharaonis (strain ATCC 35678 / DSM 2160 / CIP 103997 / JCM 8858 / NBRC 14720 / NCIMB 2260 / Gabara) (Halobacterium pharaonis).